A 289-amino-acid chain; its full sequence is Probable prolyl 4-hydroxylase 10 (289 aa).

The chain crosses the membrane as a helical; Signal-anchor for type II membrane protein span at residues 20 to 40; that stretch reads LVFAVLIMSTFVILILLAFGI. The Lumenal portion of the chain corresponds to 41-289; it reads LSVPSNNAGS…KWLRVHEYKV (249 aa). In terms of domain architecture, Fe2OG dioxygenase spans 161–284; sequence HGEGLQVLHY…KWSSTKWLRV (124 aa). Fe cation contacts are provided by His-179 and Asp-181. A glycan (N-linked (GlcNAc...) asparagine) is linked at Asn-220. A Fe cation-binding site is contributed by His-265. A 2-oxoglutarate-binding site is contributed by Lys-275.

It belongs to the P4HA family. Fe(2+) serves as cofactor. L-ascorbate is required as a cofactor.

Its subcellular location is the endoplasmic reticulum membrane. The enzyme catalyses L-prolyl-[collagen] + 2-oxoglutarate + O2 = trans-4-hydroxy-L-prolyl-[collagen] + succinate + CO2. Catalyzes the post-translational formation of 4-hydroxyproline in -Xaa-Pro-Gly- sequences in proline-rich peptide sequences of plant glycoproteins and other proteins. Hydroxyprolines are important constituent of many plant cell wall glycoproteins such as extensins, hydroxyproline-rich glycoproteins, lectins and arabinogalactan proteins. The chain is Probable prolyl 4-hydroxylase 10 from Arabidopsis thaliana (Mouse-ear cress).